Consider the following 86-residue polypeptide: Small ribosomal subunit protein bS20 (86 aa).

Residues 1 to 25 form a disordered region; the sequence is MANIKSQIKRNKQNEKRHERNKAVK. Residues 12–22 show a composition bias toward basic and acidic residues; sequence KQNEKRHERNK.

It belongs to the bacterial ribosomal protein bS20 family.

Functionally, binds directly to 16S ribosomal RNA. This chain is Small ribosomal subunit protein bS20, found in Nocardioides sp. (strain ATCC BAA-499 / JS614).